The primary structure comprises 262 residues: Dihydroorotate dehydrogenase B (NAD(+)), electron transfer subunit (262 aa).

Residues 3 to 104 form the FAD-binding FR-type domain; sequence KLQEMMTIVS…MGPLGNGFPV (102 aa). Residues 53-56, 70-72, and 79-80 contribute to the FAD site; these read RPIS, LYR, and GT. [2Fe-2S] cluster contacts are provided by cysteine 226, cysteine 231, cysteine 234, and cysteine 249.

This sequence belongs to the PyrK family. As to quaternary structure, heterotetramer of 2 PyrK and 2 PyrD type B subunits. [2Fe-2S] cluster serves as cofactor. FAD is required as a cofactor.

It participates in pyrimidine metabolism; UMP biosynthesis via de novo pathway; orotate from (S)-dihydroorotate (NAD(+) route): step 1/1. Functionally, responsible for channeling the electrons from the oxidation of dihydroorotate from the FMN redox center in the PyrD type B subunit to the ultimate electron acceptor NAD(+). The chain is Dihydroorotate dehydrogenase B (NAD(+)), electron transfer subunit from Lactococcus lactis subsp. lactis (strain IL1403) (Streptococcus lactis).